The primary structure comprises 1335 residues: Aldehyde oxidase 3 (1335 aa).

A 2Fe-2S ferredoxin-type domain is found at 8–95 (DELIFFVNGK…GAAVTTVEGI (88 aa)). Positions 47, 52, 55, and 77 each coordinate [2Fe-2S] cluster. Mo-molybdopterin is bound at residue glutamine 116. [2Fe-2S] cluster contacts are provided by cysteine 117, cysteine 120, cysteine 152, and cysteine 154. The FAD-binding PCMH-type domain occupies 236–421 (FRGERTTWIA…ISVFVPRSSK (186 aa)). 264–271 (LVIGNTYL) is an FAD binding site. The residue at position 320 (serine 320) is a Phosphoserine. FAD-binding residues include serine 354, histidine 358, aspartate 367, and leucine 411. Residues alanine 802, leucine 1043, and glutamine 1199 each contribute to the Mo-molybdopterin site. The Proton acceptor; for azaheterocycle hydroxylase activity role is filled by glutamate 1266.

This sequence belongs to the xanthine dehydrogenase family. Homodimer. [2Fe-2S] cluster is required as a cofactor. The cofactor is FAD. Requires Mo-molybdopterin as cofactor. As to expression, highly expressed in liver (at protein level). In liver, the expression is greater in males than females.

The protein resides in the cytoplasm. It catalyses the reaction an aldehyde + O2 + H2O = a carboxylate + H2O2 + H(+). Its activity is regulated as follows. Inhibited by potassium cyanide, menadione, benzamidine, raloxifene and norharmane. Functionally, oxidase with broad substrate specificity, oxidizing aromatic azaheterocycles, such as N1-methylnicotinamide and phthalazine, as well as aldehydes, such as benzaldehyde, retinal and pyridoxal. Plays a key role in the metabolism of xenobiotics and drugs containing aromatic azaheterocyclic substituents. Is probably involved in the regulation of reactive oxygen species homeostasis. May be a prominent source of superoxide generation via the one-electron reduction of molecular oxygen. May also catalyze nitric oxide (NO) production via the reduction of nitrite to NO with NADH or aldehyde as electron donor. This Mus musculus (Mouse) protein is Aldehyde oxidase 3 (Aox3).